A 430-amino-acid chain; its full sequence is Tol-Pal system protein TolB (430 aa).

Positions 1-21 are cleaved as a signal peptide; it reads MKQALRVAFGFLILWASVLHA.

This sequence belongs to the TolB family. As to quaternary structure, the Tol-Pal system is composed of five core proteins: the inner membrane proteins TolA, TolQ and TolR, the periplasmic protein TolB and the outer membrane protein Pal. They form a network linking the inner and outer membranes and the peptidoglycan layer.

It localises to the periplasm. Its function is as follows. Part of the Tol-Pal system, which plays a role in outer membrane invagination during cell division and is important for maintaining outer membrane integrity. TolB occupies a key intermediary position in the Tol-Pal system because it communicates directly with both membrane-embedded components, Pal in the outer membrane and TolA in the inner membrane. In Shigella flexneri serotype 5b (strain 8401), this protein is Tol-Pal system protein TolB.